Consider the following 262-residue polypeptide: Acyl-[acyl-carrier-protein]--UDP-N-acetylglucosamine O-acyltransferase (262 aa).

This sequence belongs to the transferase hexapeptide repeat family. LpxA subfamily. In terms of assembly, homotrimer.

The protein resides in the cytoplasm. It catalyses the reaction a (3R)-hydroxyacyl-[ACP] + UDP-N-acetyl-alpha-D-glucosamine = a UDP-3-O-[(3R)-3-hydroxyacyl]-N-acetyl-alpha-D-glucosamine + holo-[ACP]. Its pathway is glycolipid biosynthesis; lipid IV(A) biosynthesis; lipid IV(A) from (3R)-3-hydroxytetradecanoyl-[acyl-carrier-protein] and UDP-N-acetyl-alpha-D-glucosamine: step 1/6. Involved in the biosynthesis of lipid A, a phosphorylated glycolipid that anchors the lipopolysaccharide to the outer membrane of the cell. The sequence is that of Acyl-[acyl-carrier-protein]--UDP-N-acetylglucosamine O-acyltransferase from Enterobacter sp. (strain 638).